The sequence spans 167 residues: Peptide deformylase (167 aa).

Cysteine 91 and histidine 133 together coordinate Fe cation. The active site involves glutamate 134. Position 137 (histidine 137) interacts with Fe cation.

It belongs to the polypeptide deformylase family. It depends on Fe(2+) as a cofactor.

The enzyme catalyses N-terminal N-formyl-L-methionyl-[peptide] + H2O = N-terminal L-methionyl-[peptide] + formate. Functionally, removes the formyl group from the N-terminal Met of newly synthesized proteins. Requires at least a dipeptide for an efficient rate of reaction. N-terminal L-methionine is a prerequisite for activity but the enzyme has broad specificity at other positions. This Nitrosococcus oceani (strain ATCC 19707 / BCRC 17464 / JCM 30415 / NCIMB 11848 / C-107) protein is Peptide deformylase.